We begin with the raw amino-acid sequence, 862 residues long: Kinesin-like protein KIN-7J (862 aa).

A Kinesin motor domain is found at arginine 9–valine 331. Glycine 95–threonine 102 contributes to the ATP binding site. Residues valine 340–aspartate 415 are a coiled coil. Basic and acidic residues-rich tracts occupy residues glutamate 475–glutamine 499 and proline 518–glutamate 531. 2 disordered regions span residues glutamate 475–serine 532 and aspartate 596–asparagine 643. Residues serine 598–tyrosine 610 show a composition bias toward polar residues. Basic and acidic residues predominate over residues arginine 613–aspartate 629.

The protein belongs to the TRAFAC class myosin-kinesin ATPase superfamily. Kinesin family. KIN-7 subfamily.

The protein is Kinesin-like protein KIN-7J of Oryza sativa subsp. japonica (Rice).